The sequence spans 336 residues: Ribose-phosphate pyrophosphokinase (336 aa).

ATP-binding positions include 43–45 (DQE) and 102–103 (RQ). Mg(2+) contacts are provided by H136 and D178. K201 is an active-site residue. D-ribose 5-phosphate contacts are provided by residues R203, D227, and 231–235 (DTAGT).

It belongs to the ribose-phosphate pyrophosphokinase family. Class I subfamily. As to quaternary structure, homohexamer. Requires Mg(2+) as cofactor.

It localises to the cytoplasm. The catalysed reaction is D-ribose 5-phosphate + ATP = 5-phospho-alpha-D-ribose 1-diphosphate + AMP + H(+). It functions in the pathway metabolic intermediate biosynthesis; 5-phospho-alpha-D-ribose 1-diphosphate biosynthesis; 5-phospho-alpha-D-ribose 1-diphosphate from D-ribose 5-phosphate (route I): step 1/1. In terms of biological role, involved in the biosynthesis of the central metabolite phospho-alpha-D-ribosyl-1-pyrophosphate (PRPP) via the transfer of pyrophosphoryl group from ATP to 1-hydroxyl of ribose-5-phosphate (Rib-5-P). This is Ribose-phosphate pyrophosphokinase from Cereibacter sphaeroides (strain KD131 / KCTC 12085) (Rhodobacter sphaeroides).